Reading from the N-terminus, the 749-residue chain is Transcription factor RFX3 (749 aa).

Positions His183–Pro258 form a DNA-binding region, RFX-type winged-helix. Residues Val663 to Leu699 form a disordered region. Acidic residues predominate over residues Ser674–Ser687. The span at Ser688 to Glu698 shows a compositional bias: basic and acidic residues.

Belongs to the RFX family. In terms of assembly, heterodimer; heterodimerizes with RFX1 and RFX2, and RFX6. Expressed in ciliated cells of the node and in the ciliated ependymal cells of the subcommissural organ (SCO), choroid plexuses (CP) and ventricular walls during embryonic and postnatal development. Expressed in developing and mature pancreatic endocrine cells during embryogenesis and in adults (at protein level).

It is found in the nucleus. Its function is as follows. Transcription factor required for ciliogenesis and islet cell differentiation during endocrine pancreas development. Essential for the differentiation of nodal monocilia and left-right asymmetry specification during embryogenesis. Required for the biogenesis of motile cilia by governing growth and beating efficiency of motile cells. Also required for ciliated ependymal cell differentiation. Together with RFX6, participates in the differentiation of 4 of the 5 islet cell types during endocrine pancreas development, with the exception of pancreatic PP (polypeptide-producing) cells. Regulates transcription by forming a heterodimer with another RFX protein and binding to the X-box in the promoter of target genes. Regulates the expression of genes involved in ciliary assembly (DYNC2LI1, FOXJ1 and BBS4) and genes involved in ciliary motility (DNAH11, DNAH9 and DNAH5). Represses transcription of MAP1A in non-neuronal cells but not in neuronal cells. This is Transcription factor RFX3 (Rfx3) from Mus musculus (Mouse).